Here is a 393-residue protein sequence, read N- to C-terminus: MEAPLVSLDEEFEDIRPCCTEDPEEKPQSLYGTSPHHLEDPSLSELENFSSEIISFKSMEDLVNEFDEKLNVCFRNYNAKTENLAPVKNQLQIQEEEETLRDEEVWDALTDNYIPSLSEDWRDPNIEALNGNSSDTEIHEKEEEDEFIEKSENDSGINEEPLLTADQVIEEIEEMMQNSPDPEEEVEVLEEEDGGEISSQADSVLLQEMQALTQTFNNNWSYEGLRHMSGSELTELLDQVEGAIRDFSEELVHQLARRDELEFEKEVKNSFITVLIEVQNKQKEQRELMKKRRKEKGLSLQSSRIEKGNQMPLKRFSMEGISNILQSGIRQTFGSSGADRQYLNTVIPYEKKSSPPSVEDLQMLTNILFAMKEDNEKVPTLLTDYILKVLCPT.

The tract at residues 1–41 (MEAPLVSLDEEFEDIRPCCTEDPEEKPQSLYGTSPHHLEDP) is disordered. Ser-58 carries the phosphoserine modification. The disordered stretch occupies residues 130-154 (NGNSSDTEIHEKEEEDEFIEKSEND). A coiled-coil region spans residues 231–299 (SELTELLDQV…KKRRKEKGLS (69 aa)). Phosphoserine is present on residues Ser-299 and Ser-317.

This sequence belongs to the zygin family. As to quaternary structure, homodimer. Interacts with UBE4B and SAP30L. Interacts with SCOC and ULK1; SCOC interferes with ULK1-binding to FEZ1. Directly interacts with SCOC and UVRAG. Stabilizes the interaction between SCOC and UVRAG during amino acid starvation. Interacts with the NH2-terminal variable region (V1) of PKC zeta and weakly with that of PKC epsilon. Phosphorylated by protein kinase C zeta; which enhances interaction with UBE4B and polyubiquitination. In terms of processing, polyubiquitinated in a UBE4B-dependent manner; which does not lead to proteasomal degradation and may be important for neurogenic activity. Polyubiquitin linkage seems to be mainly through Lys-26. As to expression, brain.

The protein localises to the cytoplasm. Its subcellular location is the cytoskeleton. It is found in the microtubule organizing center. It localises to the centrosome. The protein resides in the cell membrane. In terms of biological role, may be involved in axonal outgrowth as component of the network of molecules that regulate cellular morphology and axon guidance machinery. May participate in the transport of mitochondria and other cargos along microtubules. This is Fasciculation and elongation protein zeta-1 (Fez1) from Rattus norvegicus (Rat).